A 269-amino-acid chain; its full sequence is MTAEGEAKNPSAGGGGDNPQHQQAAPAPAPAQGEVAQEAAVQGTGQEQERDKADREVQGGAGEKDDGACRDLVLVEDPEVLAVEDPEEAAATAALQEEMKALVASIPDGAGAAFTAMQLQELEQQSRVYQYMAARVPVPTHLVFPVWKSVTGASSEGAQKYPTLMGLATLCLDFGKNPEPEPGRCRRTDGKKWRCWRNTIPNEKYCERHMHRGRKRPVQVFLEDDEPDSASGSKPAAPGKATEGAKKADDKSPSSKKLAVAAPAAVQST.

Residues 1 to 71 (MTAEGEAKNP…GEKDDGACRD (71 aa)) form a disordered region. The segment covering 22-43 (QQAAPAPAPAQGEVAQEAAVQG) has biased composition (low complexity). Residues 47–69 (EQERDKADREVQGGAGEKDDGAC) show a composition bias toward basic and acidic residues. Residues 113–148 (AFTAMQLQELEQQSRVYQYMAARVPVPTHLVFPVWK) form the QLQ domain. A WRC domain is found at 179-223 (EPEPGRCRRTDGKKWRCWRNTIPNEKYCERHMHRGRKRPVQVFLE). Short sequence motifs (bipartite nuclear localization signal) lie at residues 184-194 (RCRRTDGKKWR) and 212-216 (RGRKR). Residues 217 to 269 (PVQVFLEDDEPDSASGSKPAAPGKATEGAKKADDKSPSSKKLAVAAPAAVQST) are disordered. The span at 243-253 (EGAKKADDKSP) shows a compositional bias: basic and acidic residues.

The protein belongs to the GRF family. Interacts with GIF1. In terms of tissue distribution, highly expressed in shoots. Expressed in developing leaves.

The protein localises to the nucleus. Involved in the regulation of cell proliferation in developing shoots and leaves. Does not possess transactivation activity. The protein is GRF-interacting factor 10 of Zea mays (Maize).